A 142-amino-acid chain; its full sequence is Hemoglobin subunit alpha (142 aa).

One can recognise a Globin domain in the interval 2–142 (VLSAADKSNV…VGTVLTSKYR (141 aa)). Ser4 is modified (phosphoserine). N6-succinyllysine is present on residues Lys8 and Lys12. An N6-acetyllysine; alternate modification is found at Lys17. N6-succinyllysine; alternate is present on Lys17. Tyr25 is modified (phosphotyrosine). Ser36 carries the post-translational modification Phosphoserine. Residue Lys41 is modified to N6-succinyllysine. Residue Ser50 is modified to Phosphoserine. His59 contributes to the O2 binding site. His88 is a heme b binding site. Ser103 carries the post-translational modification Phosphoserine. Residue Thr109 is modified to Phosphothreonine. Phosphoserine is present on residues Ser125 and Ser132. 2 positions are modified to phosphothreonine: Thr135 and Thr138. Ser139 is modified (phosphoserine).

Belongs to the globin family. As to quaternary structure, heterotetramer of two alpha chains and two beta chains. Red blood cells.

Its function is as follows. Involved in oxygen transport from the lung to the various peripheral tissues. Functionally, hemopressin acts as an antagonist peptide of the cannabinoid receptor CNR1. Hemopressin-binding efficiently blocks cannabinoid receptor CNR1 and subsequent signaling. In Pantholops hodgsonii (Chiru), this protein is Hemoglobin subunit alpha (HBA).